The sequence spans 606 residues: V-type proton ATPase catalytic subunit A (606 aa).

Alanine 2 is subject to N-acetylalanine. 240–247 provides a ligand contact to ATP; it reads AFGCGKTV.

This sequence belongs to the ATPase alpha/beta chains family. V-ATPase is a heteromultimeric enzyme made up of two complexes: the ATP-hydrolytic V1 complex and the proton translocation V0 complex. The V1 complex consists of three catalytic AB heterodimers that form a heterohexamer, three peripheral stalks each consisting of EG heterodimers, one central rotor including subunits D and F, and the regulatory subunits C and H. The proton translocation complex V0 consists of the proton transport subunit a, a ring of proteolipid subunits c9c'', rotary subunit d, subunits e and f, and the accessory subunits vah-19/Ac45 and vah-20/PRR. Expressed in proximal but not distal germ cells.

The catalysed reaction is ATP + H2O + 4 H(+)(in) = ADP + phosphate + 5 H(+)(out). With respect to regulation, ATP hydrolysis occurs at the interface between the nucleotide-binding domains of subunits A and B. ATP hydrolysis triggers a conformational change in the subunits D and F, which induces a shift of subunit d. The c-ring is subsequently rotated and results in a continuous proton translocation across the membrane. Its function is as follows. Catalytic subunit of the V1 complex of vacuolar(H+)-ATPase (V-ATPase), a multisubunit enzyme composed of a peripheral complex (V1) that hydrolyzes ATP and a membrane integral complex (V0) that translocates protons. V-ATPase is responsible for acidifying and maintaining the pH of intracellular compartments and in some cell types, is targeted to the plasma membrane, where it is responsible for acidifying the extracellular environment. Required along with other vacuolar ATPase components for the removal of protein aggregates which form in immature oocytes in the distal gonad. This removal occurs as the oocytes mature and move to the proximal gonad, is triggered by the introduction of sperm through mating and occurs before fertilization. The introduction of sperm triggers V-ATPase accumulation in proximal oocytes and induces lysosomal acidification which leads to engulfing of protein aggregates by lysosomes and subsequent clearance of the aggregates. Lysosomal acidification also leads to changes in mitochondrial morphology and function. Mitochondria in distal immature oocytes are fragmented, produce high levels of reactive oxygen species (ROS) and have high membrane potential, indicative of metabolic inactivity. In contrast, mitochondria in proximal mature oocytes are tubular with lower ROS levels and membrane potential, indicative of an active metabolic state required for aggregate mobilization before clearance. Involved in receptor-mediated endocytosis. The sequence is that of V-type proton ATPase catalytic subunit A from Caenorhabditis elegans.